A 765-amino-acid chain; its full sequence is Multifunctional tryptophan biosynthesis protein (765 aa).

The Glutamine amidotransferase type-1 domain occupies 2 to 196 (ATLLIDNYDS…LSLRGGNWDE (195 aa)). 53 to 55 (GPG) contributes to the L-glutamine binding site. Residue Cys-81 is the Nucleophile; for GATase activity of the active site. L-glutamine is bound by residues Gln-85 and 131-132 (SL). Active-site for GATase activity residues include His-170 and Glu-172. The interval 231–494 (TILSRIYAQR…NLKEFVAELL (264 aa)) is indole-3-glycerol phosphate synthase. The tract at residues 512–765 (QVKICGISSV…VEKAKSINLQ (254 aa)) is N-(5'-phosphoribosyl)anthranilate isomerase.

It carries out the reaction N-(5-phospho-beta-D-ribosyl)anthranilate = 1-(2-carboxyphenylamino)-1-deoxy-D-ribulose 5-phosphate. The enzyme catalyses 1-(2-carboxyphenylamino)-1-deoxy-D-ribulose 5-phosphate + H(+) = (1S,2R)-1-C-(indol-3-yl)glycerol 3-phosphate + CO2 + H2O. It catalyses the reaction chorismate + L-glutamine = anthranilate + pyruvate + L-glutamate + H(+). It functions in the pathway amino-acid biosynthesis; L-tryptophan biosynthesis; L-tryptophan from chorismate: step 1/5. The protein operates within amino-acid biosynthesis; L-tryptophan biosynthesis; L-tryptophan from chorismate: step 3/5. It participates in amino-acid biosynthesis; L-tryptophan biosynthesis; L-tryptophan from chorismate: step 4/5. Its function is as follows. Trifunctional enzyme bearing the Gln amidotransferase (GATase) domain of anthranilate synthase, indole-glycerolphosphate synthase, and phosphoribosylanthranilate isomerase activities. This chain is Multifunctional tryptophan biosynthesis protein (trp1), found in Phycomyces blakesleeanus.